Consider the following 685-residue polypeptide: Translation factor GUF1 homolog, mitochondrial (685 aa).

Residues 1 to 54 (MFSRLLNRGNGGVNKNITSGLLLRRTTTTTTRLSYINNSPTLSIRSFCSKSTTI) constitute a mitochondrion transit peptide. The 200-residue stretch at 68–267 (DRIRNFSIIA…AVIDRIPPPQ (200 aa)) folds into the tr-type G domain. Residues 77–84 (AHIDHGKT), 160–164 (DTPGH), and 214–217 (NKID) each bind GTP.

It belongs to the TRAFAC class translation factor GTPase superfamily. Classic translation factor GTPase family. LepA subfamily.

It is found in the mitochondrion inner membrane. The enzyme catalyses GTP + H2O = GDP + phosphate + H(+). In terms of biological role, promotes mitochondrial protein synthesis. May act as a fidelity factor of the translation reaction, by catalyzing a one-codon backward translocation of tRNAs on improperly translocated ribosomes. Binds to mitochondrial ribosomes in a GTP-dependent manner. This chain is Translation factor GUF1 homolog, mitochondrial (guf1), found in Dictyostelium discoideum (Social amoeba).